Consider the following 339-residue polypeptide: Phosphoribosylformylglycinamidine cyclo-ligase (339 aa).

It belongs to the AIR synthase family.

The protein localises to the cytoplasm. The enzyme catalyses 2-formamido-N(1)-(5-O-phospho-beta-D-ribosyl)acetamidine + ATP = 5-amino-1-(5-phospho-beta-D-ribosyl)imidazole + ADP + phosphate + H(+). Its pathway is purine metabolism; IMP biosynthesis via de novo pathway; 5-amino-1-(5-phospho-D-ribosyl)imidazole from N(2)-formyl-N(1)-(5-phospho-D-ribosyl)glycinamide: step 2/2. In Fusobacterium nucleatum subsp. nucleatum (strain ATCC 25586 / DSM 15643 / BCRC 10681 / CIP 101130 / JCM 8532 / KCTC 2640 / LMG 13131 / VPI 4355), this protein is Phosphoribosylformylglycinamidine cyclo-ligase.